Consider the following 745-residue polypeptide: Poly(A) polymerase alpha (745 aa).

Residues Met-1–Gln-17 are compositionally biased toward low complexity. Positions Met-1–Ile-22 are disordered. 2 positions are modified to phosphoserine: Ser-10 and Ser-24. Residues Phe-100–Ser-102, Thr-109, Asp-113–Asp-115, Asp-167, Lys-228, Tyr-237, and Gly-246–Val-247 contribute to the ATP site. Residues Asp-113, Asp-115, and Asp-167 each coordinate Mg(2+). Residues Lys-444, Lys-445, Lys-506, and Lys-507 each participate in a glycyl lysine isopeptide (Lys-Gly) (interchain with G-Cter in SUMO) cross-link. The short motif at Arg-490–Lys-507 is the Nuclear localization signal 1 element. Residues His-508–Pro-643 are ser/Thr-rich. The segment covering Leu-523 to Ser-534 has biased composition (low complexity). Disordered regions lie at residues Leu-523 to Ala-565 and Ser-577 to Ile-704. The segment covering Val-535–Asn-557 has biased composition (polar residues). Ser-537 and Ser-558 each carry phosphoserine. Low complexity-rich tracts occupy residues Ser-583–Ser-594 and Thr-611–Thr-640. An N6-acetyllysine mark is found at Lys-641 and Lys-650. Residues Lys-650 to Lys-665 carry the Nuclear localization signal 2 motif. Composition is skewed to basic and acidic residues over residues Pro-655–Thr-666 and Gly-682–Leu-692. The required for interaction with NUDT21 stretch occupies residues Cys-677–Arg-745. The span at Thr-694–Ile-704 shows a compositional bias: low complexity. At Lys-736 the chain carries N6-acetyllysine; alternate. Residue Lys-736 forms a Glycyl lysine isopeptide (Lys-Gly) (interchain with G-Cter in SUMO); alternate linkage. Ser-738 is subject to Phosphoserine. At Lys-740 the chain carries N6-acetyllysine; alternate. A Glycyl lysine isopeptide (Lys-Gly) (interchain with G-Cter in SUMO); alternate cross-link involves residue Lys-740.

The protein belongs to the poly(A) polymerase family. Monomer. Found in a complex with CPSF1, FIP1L1 and PAPOLA. Interacts with AHCYL1 and FIP1L1; the interaction with AHCYL1 seems to increase interaction with FIP1L1. Interacts with NUDT21; the interaction is diminished by acetylation. Interacts with KPNB1; the interaction promotes PAP nuclear import and is inhibited by acetylation of PAP. It depends on Mg(2+) as a cofactor. Requires Mn(2+) as cofactor. Post-translationally, polysumoylated. Varying sumoylation depending on tissue- and cell-type. Highly sumoylated in bladder and NIH 3T3 cells. Sumoylation is required for nuclear localization and enhances PAP stability. Desumoylated by SENP1. Inhibits polymerase activity. Hyperphosphorylation on multiple CDK2 consensus and non-consensus sites in the C-terminal Ser/Thr-rich region represses PAP activity in late M-phase. Phosphorylation/dephosphorylation may regulate the interaction between PAP and CPSF. In terms of processing, acetylated in the C-terminus. Acetylation decreases interaction with NUDT21 and KPNB1, and inhibits nuclear localization through inhibiting binding to the importin alpha/beta complex.

The protein resides in the cytoplasm. It localises to the nucleus. The enzyme catalyses RNA(n) + ATP = RNA(n)-3'-adenine ribonucleotide + diphosphate. In terms of biological role, polymerase that creates the 3'-poly(A) tail of mRNA's. Also required for the endoribonucleolytic cleavage reaction at some polyadenylation sites. May acquire specificity through interaction with a cleavage and polyadenylation specificity factor (CPSF) at its C-terminus. The polypeptide is Poly(A) polymerase alpha (PAPOLA) (Homo sapiens (Human)).